A 226-amino-acid polypeptide reads, in one-letter code: Lipoprotein-releasing system ATP-binding protein LolD 1 (226 aa).

One can recognise an ABC transporter domain in the interval leucine 6–alanine 226. Position 42–49 (glycine 42–serine 49) interacts with ATP.

Belongs to the ABC transporter superfamily. Lipoprotein translocase (TC 3.A.1.125) family. The complex is composed of two ATP-binding proteins (LolD) and two transmembrane proteins (LolC and LolE).

The protein resides in the cell inner membrane. Functionally, part of the ABC transporter complex LolCDE involved in the translocation of mature outer membrane-directed lipoproteins, from the inner membrane to the periplasmic chaperone, LolA. Responsible for the formation of the LolA-lipoprotein complex in an ATP-dependent manner. In Rhodospirillum rubrum (strain ATCC 11170 / ATH 1.1.1 / DSM 467 / LMG 4362 / NCIMB 8255 / S1), this protein is Lipoprotein-releasing system ATP-binding protein LolD 1.